A 500-amino-acid chain; its full sequence is NAD(P)H-quinone oxidoreductase chain 4, chloroplastic (500 aa).

A run of 14 helical transmembrane segments spans residues 4–24 (FPWLTILVVLPIFAGSLIFFL), 37–57 (ISICLLEFLLMTYAFCYHFQL), 87–107 (LGSILLTGFITTLATLAAWPI), 113–130 (LFYFLMLAMYSGQIGLFS), 134–154 (LLLFFIMWELELIPVYLLLSM), 167–187 (FILYTAGGSIFFLIGVLGMGL), 211–231 (ILLYFGFLIAYAVKLPIIPLH), 242–262 (HYSTCMLLAGILLKMGAYGLI), 274–294 (YLFSPWLVIIGAIQIIYAALT), 313–333 (MGFIIIGIGSITNIGLNGAIL), 334–354 (QILSHGFIGATLFFLAGTASD), 386–406 (LALPGMSGFVAELVVFFGLIT), 417–437 (LITFVMAIGMILTPIYLLSML), and 462–482 (LFILICIFLPVIGIGIYPDFV).

This sequence belongs to the complex I subunit 4 family.

Its subcellular location is the plastid. It is found in the chloroplast thylakoid membrane. It catalyses the reaction a plastoquinone + NADH + (n+1) H(+)(in) = a plastoquinol + NAD(+) + n H(+)(out). The catalysed reaction is a plastoquinone + NADPH + (n+1) H(+)(in) = a plastoquinol + NADP(+) + n H(+)(out). The protein is NAD(P)H-quinone oxidoreductase chain 4, chloroplastic (ndhD) of Hordeum vulgare (Barley).